We begin with the raw amino-acid sequence, 686 residues long: Zinc finger protein 7 (686 aa).

Residues 4–76 (VTFGDVAVHF…DLQGAEGTEA (73 aa)) enclose the KRAB domain. Glycyl lysine isopeptide (Lys-Gly) (interchain with G-Cter in SUMO2) cross-links involve residues K81 and K101. A phosphoserine mark is found at S126 and S138. 6 C2H2-type zinc fingers span residues 223–245 (SRCQECQKKLSDCLQGKHTNNCH), 250–272 (YECAECGKVFRLCSQLNQHQRIH), 278–300 (FKCTECGKAFRLSSKLIQHQRIH), 306–328 (YRCEECGKAFGQSSSLIHHQRIH), 334–356 (YGCRECGKAFSQQSQLVRHQRTH), and 362–384 (YPCKECGKAFSQSSTLAQHQRMH). Residues K279 and K292 each participate in a glycyl lysine isopeptide (Lys-Gly) (interchain with G-Cter in SUMO2) cross-link. K393 participates in a covalent cross-link: Glycyl lysine isopeptide (Lys-Gly) (interchain with G-Cter in SUMO2). 9 consecutive C2H2-type zinc fingers follow at residues 413–435 (FKCDECGKAFRWISRLSQHQLIH), 441–463 (YKCNKCTKAFGCSSRLIRHQRTH), 469–491 (FKCDECGKGFVQGSHLIQHQRIH), 497–519 (YVCNDCGKAFSQSSSLIYHQRIH), 525–547 (YECLQCGKAFSMSTQLTIHQRVH), 553–575 (YKCNECGKAFSQNSTLFQHQIIH), 581–603 (YECSECGKAFSRSSYLIEHQRIH), 634–656 (HQCEDCEKIFRWRSHLIIHQRIH), and 662–684 (YKCNDCGKAFNRSSRLTQHQKIH).

The protein belongs to the krueppel C2H2-type zinc-finger protein family.

It localises to the nucleus. May be involved in transcriptional regulation. In Pongo abelii (Sumatran orangutan), this protein is Zinc finger protein 7 (ZNF7).